The sequence spans 325 residues: ADP-L-glycero-D-manno-heptose-6-epimerase (325 aa).

NADP(+) contacts are provided by residues 10-11 (FI), 31-32 (DD), K38, and 75-79 (EGACS). The Proton acceptor role is filled by Y139. Residue K143 coordinates NADP(+). N167 is a binding site for substrate. Residues V168 and K176 each coordinate NADP(+). Catalysis depends on K176, which acts as the Proton acceptor. Residues S178, H185, 199–202 (FEGS), R212, and Y285 contribute to the substrate site.

It belongs to the NAD(P)-dependent epimerase/dehydratase family. HldD subfamily. In terms of assembly, homopentamer. NADP(+) serves as cofactor.

The catalysed reaction is ADP-D-glycero-beta-D-manno-heptose = ADP-L-glycero-beta-D-manno-heptose. The protein operates within nucleotide-sugar biosynthesis; ADP-L-glycero-beta-D-manno-heptose biosynthesis; ADP-L-glycero-beta-D-manno-heptose from D-glycero-beta-D-manno-heptose 7-phosphate: step 4/4. Functionally, catalyzes the interconversion between ADP-D-glycero-beta-D-manno-heptose and ADP-L-glycero-beta-D-manno-heptose via an epimerization at carbon 6 of the heptose. The chain is ADP-L-glycero-D-manno-heptose-6-epimerase from Azoarcus sp. (strain BH72).